Consider the following 363-residue polypeptide: Caffeic acid 3-O-methyltransferase (363 aa).

130–136 (MNQDKVL) contributes to the substrate binding site. A substrate binding region spans residues 162-180 (AFEYHGKDPRFNKVFNQGM). S-adenosyl-L-methionine-binding residues include Gly208, Asp231, Asp251, Met252, and Lys265. Residue His269 is the Proton acceptor of the active site.

Belongs to the class I-like SAM-binding methyltransferase superfamily. Cation-independent O-methyltransferase family. COMT subfamily. As to quaternary structure, homodimer.

The catalysed reaction is (E)-caffeate + S-adenosyl-L-methionine = (E)-ferulate + S-adenosyl-L-homocysteine + H(+). It participates in aromatic compound metabolism; phenylpropanoid biosynthesis. In terms of biological role, catalyzes the conversion of caffeic acid to ferulic acid and of 5-hydroxyferulic acid to sinapic acid. The resulting products may subsequently be converted to the corresponding alcohols that are incorporated into lignins. The protein is Caffeic acid 3-O-methyltransferase (COMT1) of Catharanthus roseus (Madagascar periwinkle).